The sequence spans 446 residues: Tubulin beta-2 chain (446 aa).

Positions 11, 69, 138, 142, 143, 144, 204, and 226 each coordinate GTP. Mg(2+) is bound at residue glutamate 69. The interval 426–446 is disordered; sequence QEAGIDEEEEYEEEAPAEHEE. Acidic residues predominate over residues 429–440; that stretch reads GIDEEEEYEEEA.

This sequence belongs to the tubulin family. In terms of assembly, dimer of alpha and beta chains. A typical microtubule is a hollow water-filled tube with an outer diameter of 25 nm and an inner diameter of 15 nM. Alpha-beta heterodimers associate head-to-tail to form protofilaments running lengthwise along the microtubule wall with the beta-tubulin subunit facing the microtubule plus end conferring a structural polarity. Microtubules usually have 13 protofilaments but different protofilament numbers can be found in some organisms and specialized cells. The cofactor is Mg(2+).

Its subcellular location is the cytoplasm. The protein localises to the cytoskeleton. In terms of biological role, tubulin is the major constituent of microtubules, a cylinder consisting of laterally associated linear protofilaments composed of alpha- and beta-tubulin heterodimers. Microtubules grow by the addition of GTP-tubulin dimers to the microtubule end, where a stabilizing cap forms. Below the cap, tubulin dimers are in GDP-bound state, owing to GTPase activity of alpha-tubulin. This chain is Tubulin beta-2 chain, found in Hypocrea virens (Gliocladium virens).